Here is a 333-residue protein sequence, read N- to C-terminus: Heat shock transcription factor, X-linked member 4 (333 aa).

Positions 1-66 (MASQNTEQEY…QDNSPPEDRN (66 aa)) are disordered. Low complexity predominate over residues 29–39 (GSSPDPNPDSS). Residues 49–60 (AMSQDPGSQDNS) show a composition bias toward polar residues. The DNA-binding element occupies 79-182 (FRLSFPRKLW…PRLLENIQRK (104 aa)). The segment at 227-275 (QGAPSVQGPSGTQSFRRSGMWSKKSATRHPLGNGPPQEPNGPSWEGTSG) is disordered. Residues 228–242 (GAPSVQGPSGTQSFR) are compositionally biased toward polar residues.

This sequence belongs to the HSF family.

It is found in the nucleus. This is Heat shock transcription factor, X-linked member 4 from Homo sapiens (Human).